A 429-amino-acid chain; its full sequence is MSKFLDTAIEAIAAREILDSRGRPTIEAEVHLANGVVGLAQVPSGASTGSFEAHELRDGDKSRYGGKGVLKAVKNVKEALAPKLLGLDALNQELLDRTMIAIDGSPNKSSLGANAILGVSLAAAKAGAESLDIPLYRYLGGPLANLLPVPLMNVINGGAHASNNVDFQEFMIVPIGATSFREALRWGAEVFATLSQVLDEKGLLTGVGDEGGFAPNLESNQVALELLVAAIKKAGYKPGEEVALALDVAASEFYKNGQYVYDGKPHAPAEFIDYLGQLVDQYPIVSIEDGLHEEDWQSWQLLTQKLGSQVQLVGDDLFVTNATRLQRGIEEKAANAILIKLNQIGSLTETLETIDLATRNSIRSVISHRSGETEDTTIADLAVATRAGQIKTGSLCRSERVAKYNRLLRIEDELGDRAVYAGAVGLGPK.

Q168 lines the (2R)-2-phosphoglycerate pocket. E210 (proton donor) is an active-site residue. The Mg(2+) site is built by D247, E288, and D315. (2R)-2-phosphoglycerate is bound by residues K340, R369, S370, and K391. K340 functions as the Proton acceptor in the catalytic mechanism.

The protein belongs to the enolase family. It depends on Mg(2+) as a cofactor.

It is found in the cytoplasm. The protein resides in the secreted. The protein localises to the cell surface. It carries out the reaction (2R)-2-phosphoglycerate = phosphoenolpyruvate + H2O. Its pathway is carbohydrate degradation; glycolysis; pyruvate from D-glyceraldehyde 3-phosphate: step 4/5. Catalyzes the reversible conversion of 2-phosphoglycerate (2-PG) into phosphoenolpyruvate (PEP). It is essential for the degradation of carbohydrates via glycolysis. In Nostoc punctiforme (strain ATCC 29133 / PCC 73102), this protein is Enolase.